The following is a 371-amino-acid chain: Cytochrome b (371 aa).

4 consecutive transmembrane segments (helical) span residues F25 to V45, W69 to I90, W105 to L125, and F170 to I190. Heme b contacts are provided by H75 and H89. Residues H174 and H188 each coordinate heme b. H193 contacts a ubiquinone. Transmembrane regions (helical) follow at residues Y218–F238, L280–H300, L312–T332, and F339–P358.

The protein belongs to the cytochrome b family. In terms of assembly, the cytochrome bc1 complex contains 3 respiratory subunits (MT-CYB, CYC1 and UQCRFS1), 2 core proteins (UQCRC1 and UQCRC2) and probably 6 low-molecular weight proteins. The cofactor is heme b.

The protein resides in the mitochondrion inner membrane. Its function is as follows. Component of the ubiquinol-cytochrome c reductase complex (complex III or cytochrome b-c1 complex) that is part of the mitochondrial respiratory chain. The b-c1 complex mediates electron transfer from ubiquinol to cytochrome c. Contributes to the generation of a proton gradient across the mitochondrial membrane that is then used for ATP synthesis. The chain is Cytochrome b (MT-CYB) from Malayopython reticulatus (Reticulate python).